A 549-amino-acid polypeptide reads, in one-letter code: Glucose-6-phosphate isomerase (549 aa).

The active-site Proton donor is E353. Catalysis depends on residues H384 and K513.

The protein belongs to the GPI family.

The protein resides in the cytoplasm. It carries out the reaction alpha-D-glucose 6-phosphate = beta-D-fructose 6-phosphate. It functions in the pathway carbohydrate biosynthesis; gluconeogenesis. Its pathway is carbohydrate degradation; glycolysis; D-glyceraldehyde 3-phosphate and glycerone phosphate from D-glucose: step 2/4. Catalyzes the reversible isomerization of glucose-6-phosphate to fructose-6-phosphate. In Brucella melitensis biotype 2 (strain ATCC 23457), this protein is Glucose-6-phosphate isomerase.